We begin with the raw amino-acid sequence, 729 residues long: Ribosomal RNA large subunit methyltransferase K/L (729 aa).

In terms of domain architecture, THUMP spans 47 to 158 (TFYRLCLWSR…KNELTLALDL (112 aa)).

Belongs to the methyltransferase superfamily. RlmKL family.

Its subcellular location is the cytoplasm. It carries out the reaction guanosine(2445) in 23S rRNA + S-adenosyl-L-methionine = N(2)-methylguanosine(2445) in 23S rRNA + S-adenosyl-L-homocysteine + H(+). The enzyme catalyses guanosine(2069) in 23S rRNA + S-adenosyl-L-methionine = N(2)-methylguanosine(2069) in 23S rRNA + S-adenosyl-L-homocysteine + H(+). Specifically methylates the guanine in position 2445 (m2G2445) and the guanine in position 2069 (m7G2069) of 23S rRNA. This Dichelobacter nodosus (strain VCS1703A) protein is Ribosomal RNA large subunit methyltransferase K/L.